Here is a 436-residue protein sequence, read N- to C-terminus: Hydrogenobyrinate a,c-diamide synthase (436 aa).

The GATase cobBQ-type domain occupies 244–435 (RIAVARDDAF…MHVIDFSGEA (192 aa)). The Nucleophile role is filled by cysteine 327.

Belongs to the CobB/CbiA family. Mg(2+) serves as cofactor.

It carries out the reaction hydrogenobyrinate + 2 L-glutamine + 2 ATP + 2 H2O = hydrogenobyrinate a,c-diamide + 2 L-glutamate + 2 ADP + 2 phosphate + 2 H(+). It functions in the pathway cofactor biosynthesis; adenosylcobalamin biosynthesis; cob(II)yrinate a,c-diamide from precorrin-2 (aerobic route): step 9/10. In terms of biological role, catalyzes the ATP-dependent amidation of the two carboxylate groups at positions a and c of hydrogenobyrinate, using either L-glutamine or ammonia as the nitrogen source. The sequence is that of Hydrogenobyrinate a,c-diamide synthase from Brucella ovis (strain ATCC 25840 / 63/290 / NCTC 10512).